A 98-amino-acid polypeptide reads, in one-letter code: Integration host factor subunit beta (98 aa).

Belongs to the bacterial histone-like protein family. In terms of assembly, heterodimer of an alpha and a beta chain.

This protein is one of the two subunits of integration host factor, a specific DNA-binding protein that functions in genetic recombination as well as in transcriptional and translational control. The sequence is that of Integration host factor subunit beta from Pseudomonas putida (strain GB-1).